Here is a 138-residue protein sequence, read N- to C-terminus: ATP synthase epsilon chain, chloroplastic (138 aa).

It belongs to the ATPase epsilon chain family. In terms of assembly, F-type ATPases have 2 components, CF(1) - the catalytic core - and CF(0) - the membrane proton channel. CF(1) has five subunits: alpha(3), beta(3), gamma(1), delta(1), epsilon(1). CF(0) has three main subunits: a, b and c.

The protein localises to the plastid. The protein resides in the chloroplast thylakoid membrane. In terms of biological role, produces ATP from ADP in the presence of a proton gradient across the membrane. The polypeptide is ATP synthase epsilon chain, chloroplastic (Huperzia lucidula (Shining clubmoss)).